A 463-amino-acid chain; its full sequence is Glycine--tRNA ligase (463 aa).

Substrate is bound by residues Arg-98 and Glu-174. ATP contacts are provided by residues 206-208 (RNE), 216-221 (FRTREF), 290-291 (EL), and 334-337 (GADR). 221–225 (FEQME) contributes to the substrate binding site. 330–334 (EPSLG) serves as a coordination point for substrate.

It belongs to the class-II aminoacyl-tRNA synthetase family. As to quaternary structure, homodimer.

It localises to the cytoplasm. It carries out the reaction tRNA(Gly) + glycine + ATP = glycyl-tRNA(Gly) + AMP + diphosphate. Catalyzes the attachment of glycine to tRNA(Gly). The polypeptide is Glycine--tRNA ligase (Staphylococcus haemolyticus (strain JCSC1435)).